The primary structure comprises 427 residues: Glutamate-1-semialdehyde 2,1-aminomutase (427 aa).

Lysine 265 is modified (N6-(pyridoxal phosphate)lysine).

It belongs to the class-III pyridoxal-phosphate-dependent aminotransferase family. HemL subfamily. Homodimer. The cofactor is pyridoxal 5'-phosphate.

Its subcellular location is the cytoplasm. It carries out the reaction (S)-4-amino-5-oxopentanoate = 5-aminolevulinate. The protein operates within porphyrin-containing compound metabolism; protoporphyrin-IX biosynthesis; 5-aminolevulinate from L-glutamyl-tRNA(Glu): step 2/2. The protein is Glutamate-1-semialdehyde 2,1-aminomutase of Mannheimia succiniciproducens (strain KCTC 0769BP / MBEL55E).